A 365-amino-acid polypeptide reads, in one-letter code: Eukaryotic translation initiation factor 3 subunit H (365 aa).

The MPN domain maps to Ile-15–Ala-166. The interval Lys-276 to Asp-295 is disordered. The segment covering Arg-277–Arg-287 has biased composition (basic and acidic residues).

This sequence belongs to the eIF-3 subunit H family. As to quaternary structure, component of the eukaryotic translation initiation factor 3 (eIF-3) complex.

The protein localises to the cytoplasm. In terms of biological role, component of the eukaryotic translation initiation factor 3 (eIF-3) complex, which is involved in protein synthesis of a specialized repertoire of mRNAs and, together with other initiation factors, stimulates binding of mRNA and methionyl-tRNAi to the 40S ribosome. The eIF-3 complex specifically targets and initiates translation of a subset of mRNAs involved in cell proliferation. This is Eukaryotic translation initiation factor 3 subunit H from Caenorhabditis briggsae.